Consider the following 178-residue polypeptide: Large ribosomal subunit protein eL20 (178 aa).

The protein belongs to the eukaryotic ribosomal protein eL20 family.

This chain is Large ribosomal subunit protein eL20 (RPL18A), found in Castanea sativa (Sweet chestnut).